The following is a 187-amino-acid chain: Elongation factor P (187 aa).

Lys33 is modified (N6-(3,6-diaminohexanoyl)-5-hydroxylysine).

It belongs to the elongation factor P family. In terms of processing, may be beta-lysylated on the epsilon-amino group of Lys-33 by the combined action of EpmA and EpmB, and then hydroxylated on the C5 position of the same residue by EpmC (if this protein is present). Lysylation is critical for the stimulatory effect of EF-P on peptide-bond formation. The lysylation moiety may extend toward the peptidyltransferase center and stabilize the terminal 3-CCA end of the tRNA. Hydroxylation of the C5 position on Lys-33 may allow additional potential stabilizing hydrogen-bond interactions with the P-tRNA.

The protein resides in the cytoplasm. It functions in the pathway protein biosynthesis; polypeptide chain elongation. Involved in peptide bond synthesis. Alleviates ribosome stalling that occurs when 3 or more consecutive Pro residues or the sequence PPG is present in a protein, possibly by augmenting the peptidyl transferase activity of the ribosome. Modification of Lys-33 is required for alleviation. The protein is Elongation factor P of Blochmanniella floridana.